The following is a 245-amino-acid chain: 5-oxoprolinase subunit A (245 aa).

It belongs to the LamB/PxpA family. In terms of assembly, forms a complex composed of PxpA, PxpB and PxpC.

It catalyses the reaction 5-oxo-L-proline + ATP + 2 H2O = L-glutamate + ADP + phosphate + H(+). Catalyzes the cleavage of 5-oxoproline to form L-glutamate coupled to the hydrolysis of ATP to ADP and inorganic phosphate. The polypeptide is 5-oxoprolinase subunit A (Haemophilus influenzae (strain 86-028NP)).